The following is a 133-amino-acid chain: Ribosome-binding factor A (133 aa).

It belongs to the RbfA family. Monomer. Binds 30S ribosomal subunits, but not 50S ribosomal subunits or 70S ribosomes.

Its subcellular location is the cytoplasm. Functionally, one of several proteins that assist in the late maturation steps of the functional core of the 30S ribosomal subunit. Associates with free 30S ribosomal subunits (but not with 30S subunits that are part of 70S ribosomes or polysomes). Required for efficient processing of 16S rRNA. May interact with the 5'-terminal helix region of 16S rRNA. This Proteus mirabilis (strain HI4320) protein is Ribosome-binding factor A.